A 565-amino-acid polypeptide reads, in one-letter code: Proline--tRNA ligase (565 aa).

The protein belongs to the class-II aminoacyl-tRNA synthetase family. ProS type 1 subfamily. As to quaternary structure, homodimer.

Its subcellular location is the cytoplasm. The catalysed reaction is tRNA(Pro) + L-proline + ATP = L-prolyl-tRNA(Pro) + AMP + diphosphate. Functionally, catalyzes the attachment of proline to tRNA(Pro) in a two-step reaction: proline is first activated by ATP to form Pro-AMP and then transferred to the acceptor end of tRNA(Pro). As ProRS can inadvertently accommodate and process non-cognate amino acids such as alanine and cysteine, to avoid such errors it has two additional distinct editing activities against alanine. One activity is designated as 'pretransfer' editing and involves the tRNA(Pro)-independent hydrolysis of activated Ala-AMP. The other activity is designated 'posttransfer' editing and involves deacylation of mischarged Ala-tRNA(Pro). The misacylated Cys-tRNA(Pro) is not edited by ProRS. This Lactobacillus gasseri (strain ATCC 33323 / DSM 20243 / BCRC 14619 / CIP 102991 / JCM 1131 / KCTC 3163 / NCIMB 11718 / NCTC 13722 / AM63) protein is Proline--tRNA ligase.